A 200-amino-acid chain; its full sequence is Probable GTP-binding protein EngB (200 aa).

The 175-residue stretch at 26–200 (SIPEVALAGR…IYEIAQCIKK (175 aa)) folds into the EngB-type G domain. GTP-binding positions include 34 to 41 (GRSNVGKS), 61 to 65 (GCTRQ), 80 to 83 (DLPG), 147 to 150 (TKID), and 179 to 181 (VSS). The Mg(2+) site is built by S41 and T63.

The protein belongs to the TRAFAC class TrmE-Era-EngA-EngB-Septin-like GTPase superfamily. EngB GTPase family. Mg(2+) serves as cofactor.

Its function is as follows. Necessary for normal cell division and for the maintenance of normal septation. The chain is Probable GTP-binding protein EngB from Ehrlichia ruminantium (strain Gardel).